The following is a 376-amino-acid chain: Putative glutamate--cysteine ligase 2 (376 aa).

This sequence belongs to the glutamate--cysteine ligase type 2 family. YbdK subfamily.

It catalyses the reaction L-cysteine + L-glutamate + ATP = gamma-L-glutamyl-L-cysteine + ADP + phosphate + H(+). In terms of biological role, ATP-dependent carboxylate-amine ligase which exhibits weak glutamate--cysteine ligase activity. This Mycobacterium bovis (strain ATCC BAA-935 / AF2122/97) protein is Putative glutamate--cysteine ligase 2.